Here is a 294-residue protein sequence, read N- to C-terminus: MILLDGKKTAQDIKNEITAEVNKMKANGEKVPHLAALIVGSDGASLTYVGSKVKACELVGFESTLVKMPSTTSETELLKKIKELNQNDDIDGFIVQLPLPEQIDTQKVLMTIDPSKDVDGFHPENFGKMALDMTTFIPATPFGILELLERYGVETKGKHTVVIGRSHIVGRPMSILMGRKGFPGNSTVTLTHSYTKNIAQITTQADIIISALGVPNYLKAEMVKDGAVIIDVGITRVPDETNEKGYVITGDVDFENVSKKASHITPVPGGVGPMTIAMLLKNTLLAREQRKVNN.

NADP(+)-binding positions include 164-166, serine 193, and isoleucine 234; that span reads GRS.

This sequence belongs to the tetrahydrofolate dehydrogenase/cyclohydrolase family. In terms of assembly, homodimer.

It catalyses the reaction (6R)-5,10-methylene-5,6,7,8-tetrahydrofolate + NADP(+) = (6R)-5,10-methenyltetrahydrofolate + NADPH. The enzyme catalyses (6R)-5,10-methenyltetrahydrofolate + H2O = (6R)-10-formyltetrahydrofolate + H(+). Its pathway is one-carbon metabolism; tetrahydrofolate interconversion. Catalyzes the oxidation of 5,10-methylenetetrahydrofolate to 5,10-methenyltetrahydrofolate and then the hydrolysis of 5,10-methenyltetrahydrofolate to 10-formyltetrahydrofolate. This Flavobacterium psychrophilum (strain ATCC 49511 / DSM 21280 / CIP 103535 / JIP02/86) protein is Bifunctional protein FolD.